The primary structure comprises 673 residues: uncharacterized protein (673 aa).

Residues 1-208 (MSTHSNDYFS…STGQLELPPD (208 aa)) are Cytoplasmic-facing. Serine 57, serine 112, and serine 172 each carry phosphoserine. The chain crosses the membrane as a helical span at residues 209–229 (GGYGWVVTFCVFLTMFSTWGC). Asparagine 230 is a glycosylation site (N-linked (GlcNAc...) asparagine). Residues 230–255 (NASFGVDLAYYLNHDTYPGASKYDYA) are Lumenal-facing. The chain crosses the membrane as a helical span at residues 256-276 (LIAGLTVFLGQLLSPLVMALM). Arginine 277 is a topological domain (cytoplasmic). The helical transmembrane segment at 278 to 298 (IIGLRTTMLFGDAVMLAAYLL) threads the bilayer. The Lumenal segment spans residues 299 to 315 (ASFTTKLWQLYVTQGFM). Residues 316 to 336 (VGCSISLIFVPATTVLPGWFL) form a helical membrane-spanning segment. At 337–339 (KKR) the chain is on the cytoplasmic side. A helical membrane pass occupies residues 340 to 360 (AVAMGVSLLGTGAGGVVYGLA). Residues 361–372 (TNKMLSDFGNTR) are Lumenal-facing. A helical transmembrane segment spans residues 373–393 (WCLRIIGISCSISVLVAIALL). Residues 394-426 (KERNPTPAIGLKSPRAMFEQLKAMFSLKVITKP) are Cytoplasmic-facing. Residues 427 to 447 (FVVLIALWFMFALFAYNMMVF) form a helical membrane-spanning segment. The Lumenal portion of the chain corresponds to 448 to 504 (TLSSYAISKGLSSHDASTLTAILNGSQSIGRPLMGLAGDKFGRANVTIVLTTLLTIY). Residues asparagine 471 and asparagine 492 are each glycosylated (N-linked (GlcNAc...) asparagine). The helical transmembrane segment at 505-525 (MFAFWIPAHTFVQLIFFSILV) threads the bilayer. Residues 526-549 (GSCVGVANVMNTVLIADMVKPEEF) lie on the Cytoplasmic side of the membrane. The chain crosses the membrane as a helical span at residues 550–570 (LPAWAFVNYCGAPFLLVCEVI). The Lumenal segment spans residues 571-584 (AQALTVEKDKSNPY). A helical membrane pass occupies residues 585-605 (LHAQIFCGCCFIAALILISIL). Over 606–673 (REYSIRMKLT…FLRMVYPMKV (68 aa)) the chain is Cytoplasmic. Serine 637 carries the post-translational modification Phosphoserine.

The protein belongs to the major facilitator superfamily. Monocarboxylate porter (TC 2.A.1.13) family.

It is found in the endoplasmic reticulum membrane. This is an uncharacterized protein from Saccharomyces cerevisiae (strain ATCC 204508 / S288c) (Baker's yeast).